The sequence spans 138 residues: Cysteine desulfuration protein SufE (138 aa).

The Cysteine persulfide intermediate role is filled by Cys-51.

Belongs to the SufE family. In terms of assembly, homodimer. Interacts with SufS.

The protein resides in the cytoplasm. It participates in cofactor biosynthesis; iron-sulfur cluster biosynthesis. In terms of biological role, participates in cysteine desulfuration mediated by SufS. Cysteine desulfuration mobilizes sulfur from L-cysteine to yield L-alanine and constitutes an essential step in sulfur metabolism for biosynthesis of a variety of sulfur-containing biomolecules. Functions as a sulfur acceptor for SufS, by mediating the direct transfer of the sulfur atom from the S-sulfanylcysteine of SufS, an intermediate product of cysteine desulfuration process. The sequence is that of Cysteine desulfuration protein SufE from Salmonella dublin (strain CT_02021853).